The primary structure comprises 505 residues: Trans-cinnamate 4-monooxygenase (505 aa).

A helical membrane pass occupies residues 3–23; the sequence is LLLLEKSLIAVFVAVILATVI. (E)-cinnamate is bound by residues 213–218 and alanine 306; that span reads RSRLAQ. Cysteine 447 contacts heme.

This sequence belongs to the cytochrome P450 family. Requires heme as cofactor. As to expression, expressed in roots, leaves, stems, flowers and siliques.

Its subcellular location is the membrane. The enzyme catalyses (E)-cinnamate + reduced [NADPH--hemoprotein reductase] + O2 = (E)-4-coumarate + oxidized [NADPH--hemoprotein reductase] + H2O + H(+). It participates in phenylpropanoid metabolism; trans-4-coumarate biosynthesis; trans-4-coumarate from trans-cinnamate: step 1/1. Its function is as follows. Catalyzes the first oxidative step of the phenylpropanoid pathway in higher plants by transforming trans-cinnamate into p-coumarate. The compounds formed by this pathway are essential components for lignification, pollination, and defense against ultraviolet light, predators and pathogens. This Arabidopsis thaliana (Mouse-ear cress) protein is Trans-cinnamate 4-monooxygenase.